The primary structure comprises 953 residues: TPR repeat-containing protein ZIP4 (953 aa).

The TPR 1 repeat unit spans residues 129 to 162; the sequence is ASFFHRSGLAWLDLGRVDLASACFEKATPLVSAA. The disordered stretch occupies residues 248–269; it reads AASPSSSSPRTPPYGGATPKTP. TPR repeat units follow at residues 432–465 and 473–506; these read HALL…VSRD and ADCF…EPNI. A disordered region spans residues 925–953; the sequence is VSGDEPDECSQEEAPKASISGSMSQPVLV. Polar residues predominate over residues 943–953; sequence ISGSMSQPVLV.

As to quaternary structure, interacts with HEI10 and SHOC1.

It localises to the nucleus. The protein resides in the chromosome. Its function is as follows. Required for crossover formation, complete synapsis of homologous chromosomes and bivalent formation during meiosis. Is specific to recombination events resulting in interference-sensitive crossovers (class I meiotic crossover) and works cooperatively with MER3 to promote crossovers. The chain is TPR repeat-containing protein ZIP4 from Oryza sativa subsp. japonica (Rice).